The primary structure comprises 459 residues: Beta-glucosidase (459 aa).

Glu171 (proton donor) is an active-site residue. Glu359 (nucleophile) is an active-site residue.

The protein belongs to the glycosyl hydrolase 1 family.

It carries out the reaction Hydrolysis of terminal, non-reducing beta-D-glucosyl residues with release of beta-D-glucose.. This is Beta-glucosidase (abg) from Agrobacterium sp. (strain ATCC 21400).